An 83-amino-acid polypeptide reads, in one-letter code: Exodeoxyribonuclease 7 small subunit (83 aa).

The protein belongs to the XseB family. In terms of assembly, heterooligomer composed of large and small subunits.

Its subcellular location is the cytoplasm. It carries out the reaction Exonucleolytic cleavage in either 5'- to 3'- or 3'- to 5'-direction to yield nucleoside 5'-phosphates.. Bidirectionally degrades single-stranded DNA into large acid-insoluble oligonucleotides, which are then degraded further into small acid-soluble oligonucleotides. This Bradyrhizobium sp. (strain ORS 278) protein is Exodeoxyribonuclease 7 small subunit.